The following is a 293-amino-acid chain: Acetyl-coenzyme A carboxylase carboxyl transferase subunit beta (293 aa).

One can recognise a CoA carboxyltransferase N-terminal domain in the interval 29–293 (LWVKCSECSQ…GVKELAEANT (265 aa)). Cys-33, Cys-36, Cys-52, and Cys-55 together coordinate Zn(2+). The C4-type zinc-finger motif lies at 33 to 55 (CSECSQVAYRKDLISNFNVCNNC).

Belongs to the AccD/PCCB family. As to quaternary structure, acetyl-CoA carboxylase is a heterohexamer composed of biotin carboxyl carrier protein (AccB), biotin carboxylase (AccC) and two subunits each of ACCase subunit alpha (AccA) and ACCase subunit beta (AccD). The cofactor is Zn(2+).

The protein localises to the cytoplasm. The catalysed reaction is N(6)-carboxybiotinyl-L-lysyl-[protein] + acetyl-CoA = N(6)-biotinyl-L-lysyl-[protein] + malonyl-CoA. It participates in lipid metabolism; malonyl-CoA biosynthesis; malonyl-CoA from acetyl-CoA: step 1/1. Functionally, component of the acetyl coenzyme A carboxylase (ACC) complex. Biotin carboxylase (BC) catalyzes the carboxylation of biotin on its carrier protein (BCCP) and then the CO(2) group is transferred by the transcarboxylase to acetyl-CoA to form malonyl-CoA. In Prochlorococcus marinus (strain AS9601), this protein is Acetyl-coenzyme A carboxylase carboxyl transferase subunit beta.